The chain runs to 227 residues: MYISSPHTSHFTSIDRSPAVVSESDRSMEEAAAAADMNGGVHQSRFRRVCVFCGSSSGKRRSYRDAAVELGKELVARKVDLVYGGGSLGLMGEVAEAVRNGGGHVIGVIPTTLMGKEVTGETVGEVREVGSMHERKAEMARRSDAFVALPGGYGTLEEVVEVIAWAQLGIHAKPVGLLNVDGYYDFLLAFVDKAVADGFIPPSHRHLFVSAPDAPSLVHKLEEYVPV.

Polar residues predominate over residues 1–15 (MYISSPHTSHFTSID). Residues 1 to 26 (MYISSPHTSHFTSIDRSPAVVSESDR) form a disordered region. Substrate-binding positions include glutamate 117, 135 to 136 (RK), and 152 to 158 (GYGTLEE).

Belongs to the LOG family. In terms of tissue distribution, expressed in roots, leaves and stems.

The catalysed reaction is N(6)-(dimethylallyl)adenosine 5'-phosphate + H2O = N(6)-dimethylallyladenine + D-ribose 5-phosphate. The enzyme catalyses 9-ribosyl-trans-zeatin 5'-phosphate + H2O = trans-zeatin + D-ribose 5-phosphate. Functionally, cytokinin-activating enzyme working in the direct activation pathway. Phosphoribohydrolase that converts inactive cytokinin nucleotides to the biologically active free-base forms. This chain is Probable cytokinin riboside 5'-monophosphate phosphoribohydrolase LOGL9 (LOGL9), found in Oryza sativa subsp. japonica (Rice).